The following is a 45-amino-acid chain: DNA-directed RNA polymerase subunit Rpo12 (45 aa).

Zn(2+) contacts are provided by Cys-8, Cys-23, and Cys-26.

It belongs to the archaeal Rpo12/eukaryotic RPC10 RNA polymerase subunit family. Part of the RNA polymerase complex. Zn(2+) is required as a cofactor.

The protein localises to the cytoplasm. It carries out the reaction RNA(n) + a ribonucleoside 5'-triphosphate = RNA(n+1) + diphosphate. Functionally, DNA-dependent RNA polymerase (RNAP) catalyzes the transcription of DNA into RNA using the four ribonucleoside triphosphates as substrates. The chain is DNA-directed RNA polymerase subunit Rpo12 from Methanocella arvoryzae (strain DSM 22066 / NBRC 105507 / MRE50).